Here is a 170-residue protein sequence, read N- to C-terminus: Myosin regulatory light chain 1 (170 aa).

Residues 1 to 13 (MSKAAKKKSSKKR) are compositionally biased toward basic residues. The interval 1–22 (MSKAAKKKSSKKRSGSEAAQFD) is disordered. EF-hand domains are found at residues 24-59 (KTIQ…MGQI) and 93-128 (DPEA…KRGE). Residues Asp-37, Asn-39, Asp-41, and Asp-48 each contribute to the Ca(2+) site.

Myosin is a hexamer of 2 heavy chains and 4 light chains (two regulatory light chains and two essential light chains).

This is Myosin regulatory light chain 1 (mlc-1) from Caenorhabditis elegans.